An 86-amino-acid chain; its full sequence is uncharacterized protein (86 aa).

This is an uncharacterized protein from Acidianus bottle-shaped virus (isolate Italy/Pozzuoli) (ABV).